The following is a 325-amino-acid chain: tRNA N6-adenosine threonylcarbamoyltransferase (325 aa).

The Fe cation site is built by His-111 and His-115. Substrate-binding positions include 134–138 (LVSGG), Asp-167, Gly-180, Asp-184, and Asn-284. Asp-312 contacts Fe cation.

This sequence belongs to the KAE1 / TsaD family. The cofactor is Fe(2+).

The protein resides in the cytoplasm. It catalyses the reaction L-threonylcarbamoyladenylate + adenosine(37) in tRNA = N(6)-L-threonylcarbamoyladenosine(37) in tRNA + AMP + H(+). Its function is as follows. Required for the formation of a threonylcarbamoyl group on adenosine at position 37 (t(6)A37) in tRNAs that read codons beginning with adenine. Is involved in the transfer of the threonylcarbamoyl moiety of threonylcarbamoyl-AMP (TC-AMP) to the N6 group of A37, together with TsaE and TsaB. TsaD likely plays a direct catalytic role in this reaction. The polypeptide is tRNA N6-adenosine threonylcarbamoyltransferase (Trichodesmium erythraeum (strain IMS101)).